The primary structure comprises 381 residues: cAMP-dependent protein kinase type I-alpha regulatory subunit (381 aa).

Met-1 bears the N-acetylmethionine mark. The dimerization and phosphorylation stretch occupies residues 1–135 (MESGSTAASE…AALAKAIEKN (135 aa)). Ser-3 is modified (phosphoserine). The tract at residues 64–96 (QIQNLQKAGTRTDSREDEISPPPPNPVVKGRRR) is disordered. A Phosphothreonine modification is found at Thr-75. Residues Ser-77 and Ser-83 each carry the phosphoserine modification. The Pseudophosphorylation motif motif lies at 96 to 100 (RRGAI). Ser-101 bears the Phosphoserine mark. 3',5'-cyclic AMP-binding positions include 137–254 (LFSH…SKVS), Glu-202, Arg-211, 255–381 (ILES…SLSV), Glu-326, and Arg-335. The residue at position 258 (Ser-258) is a Phosphoserine.

It belongs to the cAMP-dependent kinase regulatory chain family. In terms of assembly, the inactive holoenzyme is composed of two regulatory chains and two catalytic chains. Activation by cAMP releases the two active catalytic monomers and the regulatory dimer. Interacts with PRKACA and PRKACB. PRKAR1A also interacts with RFC2; the complex may be involved in cell survival. Interacts with AKAP4. Interacts with RARA; the interaction occurs in the presence of cAMP or FSH and regulates RARA transcriptional activity. Interacts with the phosphorylated form of PJA2. Interacts with CBFA2T3. Interacts with PRKX; regulates this cAMP-dependent protein kinase. Interacts with smAKAP; this interaction may target PRKAR1A to the plasma membrane. Interacts with AICDA. Post-translationally, the pseudophosphorylation site binds to the substrate-binding region of the catalytic chain, resulting in the inhibition of its activity.

It is found in the cell membrane. Its function is as follows. Regulatory subunit of the cAMP-dependent protein kinases involved in cAMP signaling in cells. This chain is cAMP-dependent protein kinase type I-alpha regulatory subunit (PRKAR1A), found in Pongo abelii (Sumatran orangutan).